The primary structure comprises 500 residues: Cytochrome P450 11B3, mitochondrial (500 aa).

Residues 1-24 constitute a mitochondrion transit peptide; sequence MALRVTADVWLARPWQCLHRTRAL. Cysteine 447 contacts heme.

It belongs to the cytochrome P450 family. Heme serves as cofactor. As to expression, expressed in the adrenal cortex and in different brain tissues, including hippocampus, hypothalamus, cerebellum, cerebral cortex, and midbrain.

Its subcellular location is the mitochondrion membrane. The enzyme catalyses a steroid + 2 reduced [adrenodoxin] + O2 + 2 H(+) = an 11beta-hydroxysteroid + 2 oxidized [adrenodoxin] + H2O. The catalysed reaction is 21-hydroxyprogesterone + 2 reduced [adrenodoxin] + O2 + 2 H(+) = corticosterone + 2 oxidized [adrenodoxin] + H2O. It catalyses the reaction 21-hydroxyprogesterone + 2 reduced [adrenodoxin] + O2 + 2 H(+) = 18-hydroxy-11-deoxycorticosterone + 2 oxidized [adrenodoxin] + H2O. It carries out the reaction 21-hydroxyprogesterone + 2 reduced [adrenodoxin] + O2 + 2 H(+) = 19-hydroxy-11-deoxycorticosterone + 2 oxidized [adrenodoxin] + H2O. Functionally, a cytochrome P450 monooxygenase involved in the biosynthesis of adrenal corticoids. Catalyzes the hydroxylation of steroids at 11beta, 18- or 19-positions, with preferred regioselectivity at 11beta and 18. Converts 11-deoxycorticosterone into corticosterone, 18-hydroxy-11-deoxycorticosterone, and/or 19-hydroxy-11-deoxycorticosterone, but not to 18-hydroxycorticosterone or aldosterone. Mechanistically, uses molecular oxygen inserting one oxygen atom into a substrate for hydroxylation and reducing the second into a water molecule. Two electrons are provided by NADPH via a two-protein mitochondrial transfer system comprising flavoprotein FDXR (adrenodoxin/ferredoxin reductase) and nonheme iron-sulfur protein FDX1 or FDX2 (adrenodoxin/ferredoxin). The sequence is that of Cytochrome P450 11B3, mitochondrial (Cyp11b3) from Rattus norvegicus (Rat).